The chain runs to 22 residues: Mu-conotoxin GIIIB (22 aa).

Cystine bridges form between cysteine 3–cysteine 15, cysteine 4–cysteine 20, and cysteine 10–cysteine 21. 4-hydroxyproline; partial occurs at positions 6 and 7. A 4-hydroxyproline modification is found at proline 17. Position 22 is an alanine amide (alanine 22).

The protein belongs to the conotoxin M superfamily. Expressed by the venom duct.

It localises to the secreted. Its function is as follows. Mu-conotoxins block voltage-gated sodium channels (Nav). The protein is Mu-conotoxin GIIIB of Conus geographus (Geography cone).